The primary structure comprises 1706 residues: MGVPKFYRWISERYPCLSEVVKEHQIPEFDNLYLDMNGIIHQCSHPNDDDVHFRISDDKIFTDIFHYLEVLFRIIKPRKVFFMAVDGVAPRAKMNQQRGRRFRSAKEAEDKIKKAIEKGETLPTEARFDSNCITPGTEFMARLHEHLKYFVNMKISTDKSWQGVTIYFSGHETPGEGEHKIMEFIRSEKAKPDHDPNTRHCLYGLDADLIMLGLTSHEAHFSLLREEVRFGGKKTQRVCAPEETTFHLLHLSLMREYIDYEFSVLKEKITFKYDIERIIDDWILMGFLVGNDFIPHLPHLHINHDALPLLYGTYVTILPELGGYINESGHLNLPRFEKYLVKLSDFDREHFSEVFVDLKWFESKVGNKYLNEAAGVAAEEARNYKEKKKLKGQENSLCWTALDKNEGEMITSKDNLEDETEDDDLFETEFRQYKRTYYMTKMGVDVVSDDFLADQAACYVQAIQWILHYYYHGVQSWSWYYPYHYAPFLSDIHNISTLKIHFELGKPFKPFEQLLAVLPAASKNLLPACYQHLMTNEDSPIIEYYPPDFKTDLNGKQQEWEAVVLIPFIDEKRLLEAMETCNHSLKKEERKRNQHSECLMCWYDRDTEFIYPSPWPEKFPAIERCCTRYKIISLDAWRVDINKNKITRIDQKALYFCGFPTLKHIRHKFFLKKSGVQVFQQSSRGENMMLEILVDAESDELTVENVASSVLGKSVFVNWPHLEEARVVAVSDGETKFYLEEPPGTQKLYSGRTAPPSKVVHLGDKEQSNWAKEVQGISEHYLRRKGIIINETSAVVYAQLLTGRKYQINQNGEVRLEKQWSKQVVPFVYQTIVKDIRAFDSRFSNIKTLDDLFPLRSMVFMLGTPYYGCTGEVQDSGDVITEGRIRVIFSIPCEPNLDALIQNQHKYSIKYNPGYVLASRLGVSGYLVSRFTGSIFIGRGSRRNPHGDHKANVGLNLKFNKKNEEVPGYTKKVGSEWMYSSAAEQLLAEYLERAPELFSYIAKNSQEDVFYEDDIWPGENENGAEKVQEIITWLKGHPVSTLSRSSCDLQILDAAIVEKIEEEVEKCKQRKNNKKVRVTVKPHLLYRPLEQQHGVIPDRDAEFCLFDRVVNVRENFSVPVGLRGTIIGIKGANREADVLFEVLFDEEFPGGLTIRCSPGRGYRLPTSALVNLSHGSRSETGNQKLTAIVKPQPAVHQHSSSSSVSSGHLGALNHSPQSLFVPTQVPTKDDDEFCNIWQSLQGSGKMQYFQPTIQEKGAVLPQEISQVNQHHKSGFNDNSVKYQQRKHDPHRKFKEECKSPKAECWSQKMSNKQPNSGIENFLASLNISKENEVQSSHHGEPPSEEHLSPQSFAMGTRMLKEILKIDGSNTVDHKNEIKQIANEIPVSSNRRDEYGLPSQPKQNKKLASYMNKPHSANEYHNVQSMDNMCWPAPSQIPPVSTPVTELSRICSLVGMPQPDFSFLRMPQTMTVCQVKLSNGLLVHGPQCHSENEAKEKAALFALQQLGSLGMNFPLPSQVFANYPSAVPPGTIPPAFPPPTGWDHYGSNYALGAANIMPSSSHLFGSMPWGPSVPVPGKPFHHTLYSGTMPMAGGIPGGVHNQFIPLQVTKKRVANKKNFENKEAQSSQATPVQTSQPDSSNIVKVSPRESSSASLKSSPIAQPASSFQVETASQGHSISHHKSTPISSSRRKSRKLAVNFGVSKPSE.

Phosphoserine is present on serine 1348. The interval 1619-1706 is disordered; the sequence is ENKEAQSSQA…VNFGVSKPSE (88 aa). Residues 1623 to 1642 are compositionally biased toward polar residues; the sequence is AQSSQATPVQTSQPDSSNIV. Serine 1645 carries the phosphoserine modification. The segment covering 1647–1657 has biased composition (low complexity); sequence RESSSASLKSS. Polar residues predominate over residues 1658–1676; sequence PIAQPASSFQVETASQGHS. The segment covering 1677-1694 has biased composition (basic residues); sequence ISHHKSTPISSSRRKSRK.

The protein belongs to the 5'-3' exonuclease family. Found in a mRNP complex with UPF1, UPF2, UPF3B and XRN1. Associates with alpha and beta tubulins. Interacts with DIS3L2. Interacts with ZC3HAV1 in an RNA-dependent manner. Interacts with ZFP36L1. Interacts with TRIM71 (via NHL repeats) in an RNA-dependent manner. Interacts with YTHDC2 (via ANK repeats). Interacts with DHX34; the interaction is RNA-independent. As to expression, expressed in heart, brain, pancreas, spleen, testis, osteogenic sarcoma (OGS) biopsy and primary cell lines.

It is found in the cytoplasm. Its function is as follows. Major 5'-3' exoribonuclease involved in mRNA decay. Required for the 5'-3'-processing of the G4 tetraplex-containing DNA and RNA substrates. The kinetic of hydrolysis is faster for G4 RNA tetraplex than for G4 DNA tetraplex and monomeric RNA tetraplex. Binds to RNA and DNA. Plays a role in replication-dependent histone mRNA degradation. May act as a tumor suppressor protein in osteogenic sarcoma (OGS). The protein is 5'-3' exoribonuclease 1 of Homo sapiens (Human).